The chain runs to 524 residues: Serine/threonine-protein kinase PAK 2 (524 aa).

Residues 1 to 81 (MSDNGELEDK…PEISPPSDFE (81 aa)) form a disordered region. An N-acetylserine modification is found at Ser-2. 4 positions are modified to phosphoserine: Ser-2, Ser-20, Ser-55, and Ser-58. A Phosphothreonine modification is found at Thr-60. Lys-62 bears the N6-acetyllysine mark. Ser-64 is modified (phosphoserine). Positions 67-81 (KEKERPEISPPSDFE) are enriched in basic and acidic residues. The GTPase-binding stretch occupies residues 69–112 (KERPEISPPSDFEHTIHVGFDAVTGEFTGMPEQWARLLQTSNIT). An autoregulatory region region spans residues 69 to 137 (KERPEISPPS…KFYDSNTVKQ (69 aa)). A CRIB domain is found at 74-87 (ISPPSDFEHTIHVG). Residues 88-248 (FDAVTGEFTG…IVSIGDPKKK (161 aa)) form a linker region. At Lys-128 the chain carries N6-acetyllysine. Thr-134 carries the phosphothreonine modification. Tyr-139 carries the phosphotyrosine modification. Phosphoserine is present on Ser-141. A Phosphothreonine modification is found at Thr-143. Ser-152 is subject to Phosphoserine. Thr-159 and Thr-169 each carry phosphothreonine. The segment covering 169-178 (TEEDDDDEEA) has biased composition (acidic residues). A disordered region spans residues 169 to 188 (TEEDDDDEEAAPPVIAPRPD). Ser-197 carries the phosphoserine modification. Residues 204–228 (APVGDSHVDSGAKSSDKQKKKTKMT) form a disordered region. Over residues 209–228 (SHVDSGAKSSDKQKKKTKMT) the composition is skewed to basic and acidic residues. The short motif at 245–251 (PKKKYTR) is the Nuclear localization signal element. The Protein kinase domain maps to 249 to 500 (YTRYEKIGQG…AKELLQHPFL (252 aa)). Residues 255–263 (IGQGASGTV) and Lys-278 contribute to the ATP site. The active-site Proton acceptor is Asp-368. At Thr-402 the chain carries Phosphothreonine; by autocatalysis.

Interacts tightly with GTP-bound but not GDP-bound CDC42/p21 and RAC1. Interacts with SH3MD4. Interacts with SCRIB. Interacts with ARHGEF7 and GIT1. PAK-2p34 interacts with ARHGAP10. Interacts with RAC1. Post-translationally, full-length PAK2 is autophosphorylated when activated by CDC42/p21. Following cleavage, both peptides, PAK-2p27 and PAK-2p34, become highly autophosphorylated. Autophosphorylation of PAK-2p27 can occur in the absence of any effectors and is dependent on phosphorylation of Thr-402, because PAK-2p27 is acting as an exogenous substrate. During apoptosis proteolytically cleaved by caspase-3 or caspase-3-like proteases to yield active PAK-2p34. In terms of processing, ubiquitinated, leading to its proteasomal degradation.

It is found in the cytoplasm. Its subcellular location is the nucleus. The protein localises to the perinuclear region. The protein resides in the membrane. It catalyses the reaction L-seryl-[protein] + ATP = O-phospho-L-seryl-[protein] + ADP + H(+). The enzyme catalyses L-threonyl-[protein] + ATP = O-phospho-L-threonyl-[protein] + ADP + H(+). With respect to regulation, activated by binding small G proteins. Binding of GTP-bound CDC42 or RAC1 to the autoregulatory region releases monomers from the autoinhibited dimer, enables phosphorylation of Thr-402 and allows the kinase domain to adopt an active structure. Following caspase cleavage, autophosphorylated PAK-2p34 is constitutively active. In terms of biological role, serine/threonine protein kinase that plays a role in a variety of different signaling pathways including cytoskeleton regulation, cell motility, cell cycle progression, apoptosis or proliferation. Acts as a downstream effector of the small GTPases CDC42 and RAC1. Activation by the binding of active CDC42 and RAC1 results in a conformational change and a subsequent autophosphorylation on several serine and/or threonine residues. Full-length PAK2 stimulates cell survival and cell growth. Phosphorylates MAPK4 and MAPK6 and activates the downstream target MAPKAPK5, a regulator of F-actin polymerization and cell migration. Phosphorylates JUN and plays an important role in EGF-induced cell proliferation. Phosphorylates many other substrates including histone H4 to promote assembly of H3.3 and H4 into nucleosomes, BAD, ribosomal protein S6, or MBP. Phosphorylates CASP7, thereby preventing its activity. Additionally, associates with ARHGEF7 and GIT1 to perform kinase-independent functions such as spindle orientation control during mitosis. On the other hand, apoptotic stimuli such as DNA damage lead to caspase-mediated cleavage of PAK2, generating PAK-2p34, an active p34 fragment that translocates to the nucleus and promotes cellular apoptosis involving the JNK signaling pathway. Caspase-activated PAK2 phosphorylates MKNK1 and reduces cellular translation. This chain is Serine/threonine-protein kinase PAK 2 (PAK2), found in Oryctolagus cuniculus (Rabbit).